The following is a 44-amino-acid chain: Large ribosomal subunit protein bL36 (44 aa).

The protein belongs to the bacterial ribosomal protein bL36 family.

The polypeptide is Large ribosomal subunit protein bL36 (Pseudoalteromonas translucida (strain TAC 125)).